The following is a 269-amino-acid chain: Spermatogenesis-associated serine-rich protein 1 (269 aa).

Positions 1–14 are enriched in basic and acidic residues; it reads MESSKDTQHGDALE. Residues 1 to 92 are disordered; the sequence is MESSKDTQHG…SKVSLPEIPK (92 aa). The segment covering 18–38 has biased composition (polar residues); that stretch reads CLANRTSSRQNKRTSLSSSDG. Residue Thr54 is modified to Phosphothreonine. A compositionally biased stretch (low complexity) spans 67-86; sequence SSSSSSSSSSAQSNRSSKVS. Ser72, Ser75, and Ser82 each carry phosphoserine.

The sequence is that of Spermatogenesis-associated serine-rich protein 1 (Spats1) from Mus musculus (Mouse).